We begin with the raw amino-acid sequence, 478 residues long: MAAALFSSNGEEAIGRNIDIGQVDIQSSPEKDLGEFYEIEKTVEFIQRNAAQKVALQFPDDLLLDSVKVARKLEEATGAKTYILGDTSYGSCCVDEVAAEHVKANVLVHYGRACLSPCCRLPVSYVFGRKAVNMDLCAEAFLSHYRDTESHVVVLSDVVYDHALGELAKRIRSAYPNVIFSKLTSCGETASPDEIVKFGRRFSPDLRLWPESYGIFYVGGEGSTLNNLMLTWPRCSFFSFNPFTGEGRTEGLHVNRALMIRFYLIERARDAHVFGILVGTLGVSDYLSALKHLKNIIHLAGKKSYMFSVGKLNPAKLANFPEIDVFVLVACPENSLLDSSEFYKPVVTPDEMEIACNPAREWHGYCITNFRELLPGGSAYVEFPETDPSDAHHTDVSLITGNLRSSHLTVAETLEKDSDTSLVQRNSKTALAQMSSAASYLASRSWQGLDKALGQTPVVKAVEGRKGIAIAYEDEICS.

3 residues coordinate [4Fe-4S] cluster: Cys93, Cys114, and Cys331.

It belongs to the DPH1/DPH2 family. DPH2 subfamily. In terms of assembly, component of the 2-(3-amino-3-carboxypropyl)histidine synthase complex composed of dph1, dph2, dph3 and a NADH-dependent reductase. Requires [4Fe-4S] cluster as cofactor.

The protein operates within protein modification; peptidyl-diphthamide biosynthesis. In terms of biological role, required for the first step of diphthamide biosynthesis, a post-translational modification of histidine which occurs in elongation factor 2. Dph1 and dph2 transfer a 3-amino-3-carboxypropyl (ACP) group from S-adenosyl-L-methionine (SAM) to a histidine residue, the reaction is assisted by a reduction system comprising dph3 and a NADH-dependent reductase. Facilitates the reduction of the catalytic iron-sulfur cluster found in the dph1 subunit. This chain is 2-(3-amino-3-carboxypropyl)histidine synthase subunit 2 (dph2), found in Xenopus laevis (African clawed frog).